The sequence spans 197 residues: uncharacterized protein (197 aa).

An N-terminal signal peptide occupies residues 1–23; it reads MSARAPKELRLALPPCLLNRTFA. At 24-61 the chain is on the extracellular side; that stretch reads SPNASGSGNTGARGPGAVGSGTCITQVGQQLFQSFSST. N-linked (GlcNAc...) asparagine glycosylation occurs at asparagine 26. Residues 62-82 form a helical membrane-spanning segment; sequence LVLIVLVTLIFCLIVLSLSTF. Residues 83-197 lie on the Cytoplasmic side of the membrane; it reads HIHKRRMKKR…EGLLQTVVLS (115 aa). A disordered region spans residues 94–180; the sequence is MQRAQEEYER…SSPQGAHAAS (87 aa). 2 stretches are compositionally biased toward basic and acidic residues: residues 96-107 and 125-136; these read RAQEEYERDHCS and HAKETRLERQPR. A compositionally biased stretch (low complexity) spans 141–161; it reads CAPSNASSLSSSSPGLPCQGP. Positions 162–171 are enriched in pro residues; the sequence is CAPPPPPPAS.

Its subcellular location is the membrane. This is an uncharacterized protein from Homo sapiens (Human).